A 547-amino-acid polypeptide reads, in one-letter code: Chaperonin GroEL (547 aa).

ATP contacts are provided by residues 30–33, K51, 87–91, G415, 479–481, and D495; these read TLGP, DGTTT, and NAA.

The protein belongs to the chaperonin (HSP60) family. In terms of assembly, forms a cylinder of 14 subunits composed of two heptameric rings stacked back-to-back. Interacts with the co-chaperonin GroES.

The protein resides in the cytoplasm. The catalysed reaction is ATP + H2O + a folded polypeptide = ADP + phosphate + an unfolded polypeptide.. Together with its co-chaperonin GroES, plays an essential role in assisting protein folding. The GroEL-GroES system forms a nano-cage that allows encapsulation of the non-native substrate proteins and provides a physical environment optimized to promote and accelerate protein folding. This chain is Chaperonin GroEL, found in Enterobacter sp. (strain 638).